A 197-amino-acid polypeptide reads, in one-letter code: Probable S-adenosylmethionine-dependent methyltransferase MJ0882 (197 aa).

S-adenosyl-L-methionine is bound by residues 63 to 67, Asp84, and Asn129; that span reads GCGYG. 129–132 serves as a coordination point for substrate; that stretch reads NPPI.

This sequence belongs to the methyltransferase superfamily.

Its function is as follows. Probable methyltransferase that uses S-adenosylmethionine as the methyl donor. Binds neither NAD nor NADP in vitro. In Methanocaldococcus jannaschii (strain ATCC 43067 / DSM 2661 / JAL-1 / JCM 10045 / NBRC 100440) (Methanococcus jannaschii), this protein is Probable S-adenosylmethionine-dependent methyltransferase MJ0882.